We begin with the raw amino-acid sequence, 424 residues long: Bone morphogenetic protein 10 (424 aa).

The signal sequence occupies residues 1–21 (MGSLVLTLCALFCLAAYLVSG). Positions 22 to 316 (SPIMNLEQSP…IYDSTARIRR (295 aa)) are excised as a propeptide. Asn67 and Asn131 each carry an N-linked (GlcNAc...) asparagine glycan. 3 disulfide bridges follow: Cys323/Cys389, Cys352/Cys421, and Cys356/Cys423.

The protein belongs to the TGF-beta family. In terms of assembly, homodimer; disulfide-linked. Interacts with FBN1 (via N-terminal domain) and FBN2. Interacts with ENG. As to expression, detected in mammary epithelia (at protein level).

It is found in the secreted. Its function is as follows. Required for maintaining the proliferative activity of embryonic cardiomyocytes by preventing premature activation of the negative cell cycle regulator CDKN1C/p57KIP and maintaining the required expression levels of cardiogenic factors such as MEF2C and NKX2-5. Acts as a ligand for ACVRL1/ALK1, BMPR1A/ALK3 and BMPR1B/ALK6, leading to activation of SMAD1, SMAD5 and SMAD8 transcription factors. Inhibits endothelial cell migration and growth. May reduce cell migration and cell matrix adhesion in breast cancer cell lines. The protein is Bone morphogenetic protein 10 (BMP10) of Homo sapiens (Human).